The sequence spans 86 residues: Large ribosomal subunit protein bL31 (86 aa).

Positions 65–86 (YGMGSANSATSKEQKEEKDSNK) are disordered. Residues 76 to 86 (KEQKEEKDSNK) show a composition bias toward basic and acidic residues.

This sequence belongs to the bacterial ribosomal protein bL31 family. Type A subfamily. In terms of assembly, part of the 50S ribosomal subunit.

Binds the 23S rRNA. This Prochlorococcus marinus (strain MIT 9312) protein is Large ribosomal subunit protein bL31.